Consider the following 183-residue polypeptide: Ribosome-recycling factor (183 aa).

This sequence belongs to the RRF family.

The protein localises to the cytoplasm. Its function is as follows. Responsible for the release of ribosomes from messenger RNA at the termination of protein biosynthesis. May increase the efficiency of translation by recycling ribosomes from one round of translation to another. The chain is Ribosome-recycling factor from Treponema pallidum (strain Nichols).